The sequence spans 512 residues: Glutathione-binding protein GsiB (512 aa).

An N-terminal signal peptide occupies residues 1 to 26 (MTQFITHKWLAALGLASSIAAFPALA).

It belongs to the bacterial solute-binding protein 5 family. The complex is composed of two ATP-binding proteins (GsiA), two transmembrane proteins (GsiC and GsiD) and a solute-binding protein (GsiB).

It is found in the periplasm. Functionally, part of the ABC transporter complex GsiABCD involved in glutathione import. Binds glutathione. The sequence is that of Glutathione-binding protein GsiB from Salmonella typhi.